The primary structure comprises 561 residues: Arf-GAP domain and FG repeat-containing protein 1 (561 aa).

The Arf-GAP domain maps to 11–135 (EKHLKMLRDM…WYVPPEQAKV (125 aa)). The segment at 29 to 52 (CFDCDQRGPTYVNMTVGSFVCTSC) adopts a C4-type zinc-finger fold. At S167 the chain carries Phosphoserine. The tract at residues 170–193 (ALHLNKGTPSQSPVVGRSQGQQQE) is disordered. Polar residues predominate over residues 176–191 (GTPSQSPVVGRSQGQQ). Position 177 is a phosphothreonine (T177). S181 and S362 each carry phosphoserine. An O-linked (GlcNAc) serine glycan is attached at S367. The disordered stretch occupies residues 413 to 433 (SAQTQPASSGPAPFGATPSTN).

Interacts with FCHO1. Interacts with EPS15R and EPS15. In terms of processing, O-glycosylated. As to expression, expressed in the testes (at protein level).

It localises to the nucleus. The protein resides in the cytoplasmic vesicle. Functionally, required for vesicle docking or fusion during acrosome biogenesis. May play a role in RNA trafficking or localization. The protein is Arf-GAP domain and FG repeat-containing protein 1 (Agfg1) of Mus musculus (Mouse).